Reading from the N-terminus, the 286-residue chain is Tryptophan 2,3-dioxygenase (286 aa).

Substrate is bound by residues 53–57 (FIVQH), tyrosine 115, and arginine 119. Histidine 242 is a heme binding site. Threonine 256 provides a ligand contact to substrate.

It belongs to the tryptophan 2,3-dioxygenase family. In terms of assembly, homotetramer. It depends on heme as a cofactor.

It carries out the reaction L-tryptophan + O2 = N-formyl-L-kynurenine. It functions in the pathway amino-acid degradation; L-tryptophan degradation via kynurenine pathway; L-kynurenine from L-tryptophan: step 1/2. Its function is as follows. Heme-dependent dioxygenase that catalyzes the oxidative cleavage of the L-tryptophan (L-Trp) pyrrole ring and converts L-tryptophan to N-formyl-L-kynurenine. Catalyzes the oxidative cleavage of the indole moiety. This chain is Tryptophan 2,3-dioxygenase, found in Kineococcus radiotolerans (strain ATCC BAA-149 / DSM 14245 / SRS30216).